The sequence spans 38 residues: MKVRASVKKMCRNCKIIKRHGVVRIICSDEPKHKQRQG.

Belongs to the bacterial ribosomal protein bL36 family.

This is Large ribosomal subunit protein bL36 from Hamiltonella defensa subsp. Acyrthosiphon pisum (strain 5AT).